The following is a 256-amino-acid chain: Transcription factor bHLH131 (256 aa).

Residues 91–140 (VAAKKHSDAERRRRLRINSQFATLRTILPNLVKQDKASVLGETVRYFNEL) form the bHLH domain.

In terms of assembly, homodimer.

It is found in the nucleus. This chain is Transcription factor bHLH131 (BHLH131), found in Arabidopsis thaliana (Mouse-ear cress).